The following is a 61-amino-acid chain: Small ribosomal subunit protein uS14 (61 aa).

Cysteine 24, cysteine 27, cysteine 40, and cysteine 43 together coordinate Zn(2+).

It belongs to the universal ribosomal protein uS14 family. Zinc-binding uS14 subfamily. In terms of assembly, part of the 30S ribosomal subunit. Contacts proteins S3 and S10. The cofactor is Zn(2+).

Its function is as follows. Binds 16S rRNA, required for the assembly of 30S particles and may also be responsible for determining the conformation of the 16S rRNA at the A site. In Staphylococcus aureus (strain USA300 / TCH1516), this protein is Small ribosomal subunit protein uS14.